Reading from the N-terminus, the 208-residue chain is Large ribosomal subunit protein uL4 (208 aa).

Belongs to the universal ribosomal protein uL4 family. In terms of assembly, part of the 50S ribosomal subunit.

In terms of biological role, one of the primary rRNA binding proteins, this protein initially binds near the 5'-end of the 23S rRNA. It is important during the early stages of 50S assembly. It makes multiple contacts with different domains of the 23S rRNA in the assembled 50S subunit and ribosome. Forms part of the polypeptide exit tunnel. The chain is Large ribosomal subunit protein uL4 from Anaplasma marginale (strain Florida).